The primary structure comprises 803 residues: Volume-regulated anion channel subunit LRRC8C (803 aa).

Residues 1 to 22 (MIPVTEFRQFSEQQPAFRVLKP) are Cytoplasmic-facing. The helical transmembrane segment at 23–48 (WWDVFTDYLSVAMLMIGVFGCTLQVM) threads the bilayer. Over 49–124 (QDKIICLPKR…CYERALHWYA (76 aa)) the chain is Extracellular. Intrachain disulfides connect Cys-54–Cys-308 and Cys-115–Cys-293. A helical membrane pass occupies residues 125–144 (KYFPYLVLIHTLVFMLCSNF). The Cytoplasmic portion of the chain corresponds to 145 to 262 (WFKFPGSSSK…EEGDILYAMY (118 aa)). The tract at residues 177–206 (EVSGEDSEEKDNRKNNMNRSGTIQSGPEGN) is disordered. The segment covering 191–206 (NNMNRSGTIQSGPEGN) has biased composition (polar residues). Phosphoserine is present on residues Ser-212 and Ser-215. A helical membrane pass occupies residues 263 to 284 (VRQTVLKVIKFLIIIAYNSALV). At 285-314 (SKVQFTVDCNVDIQDMTGYKNFSCNHTMAH) the chain is on the extracellular side. Residues 315-339 (LFSKLSFCYLCFVSIYGLTCLYTLY) form a helical membrane-spanning segment. Topologically, residues 340–803 (WLFYRSLREY…SDVREQMKAD (464 aa)) are cytoplasmic. LRR repeat units follow at residues 409–420 (WTPDKLRQKLQT), 421–443 (NAHN…VFEI), 446–466 (LQSL…IAQL), 467–488 (DNLQ…ALSF), 490–513 (KENL…MYGL), 515–537 (NLEE…TLES), 541–563 (LKSL…VVDV), 566–586 (HLQK…NNLK), 588–611 (MTNL…VFSL), 613–635 (SLQE…SFQH), 637–659 (RKLT…IKKL), 660–682 (TSLE…LFLC), 684–705 (KIRY…IGVL), 706–728 (QSLQ…LYFC), 730–751 (KLKT…IGNL), 752–774 (LFLS…LGDC), and 776–799 (ALKR…VREQ).

Belongs to the LRRC8 family. As to quaternary structure, heterohexamer; oligomerizes with other LRRC8 proteins (LRRC8A, LRRC8B, LRRC8D and/or LRRC8E) to form a heterohexamer. Homoheptamer; inactive, likely because it is not targeted to the plasma membrane in the absence of LRRC8A. In vivo, the subunit composition may depend primarily on expression levels, and heterooligomeric channels containing various proportions of the different LRRC8 proteins may coexist. As to expression, expressed at very low levels in adipose tissue.

It is found in the cell membrane. Its subcellular location is the endoplasmic reticulum membrane. The catalysed reaction is chloride(in) = chloride(out). The enzyme catalyses iodide(out) = iodide(in). It catalyses the reaction taurine(out) = taurine(in). It carries out the reaction 2',3'-cGAMP(out) = 2',3'-cGAMP(in). Its function is as follows. Non-essential component of the volume-regulated anion channel (VRAC, also named VSOAC channel), an anion channel required to maintain a constant cell volume in response to extracellular or intracellular osmotic changes. The VRAC channel conducts iodide better than chloride and can also conduct organic osmolytes like taurine. Plays a redundant role in the efflux of amino acids, such as aspartate and glutamate, in response to osmotic stress. The VRAC channel also mediates transport of immunoreactive cyclic dinucleotide GMP-AMP (2'-3'-cGAMP), an immune messenger produced in response to DNA virus in the cytosol. Channel activity requires LRRC8A plus at least one other family member (LRRC8B, LRRC8C, LRRC8D or LRRC8E); channel characteristics depend on the precise subunit composition. May play a role in adipogenesis. In Mus musculus (Mouse), this protein is Volume-regulated anion channel subunit LRRC8C.